The primary structure comprises 170 residues: Lipoprotein signal peptidase (170 aa).

2 helical membrane passes run 71–91 (YFFI…ILEN) and 97–116 (AIAY…DRVF). Active-site residues include Asp122 and Asp140. A helical membrane pass occupies residues 131–151 (WHWPAFNLADIAIVLGALLFV).

This sequence belongs to the peptidase A8 family.

It is found in the cell inner membrane. The catalysed reaction is Release of signal peptides from bacterial membrane prolipoproteins. Hydrolyzes -Xaa-Yaa-Zaa-|-(S,diacylglyceryl)Cys-, in which Xaa is hydrophobic (preferably Leu), and Yaa (Ala or Ser) and Zaa (Gly or Ala) have small, neutral side chains.. It functions in the pathway protein modification; lipoprotein biosynthesis (signal peptide cleavage). Functionally, this protein specifically catalyzes the removal of signal peptides from prolipoproteins. The polypeptide is Lipoprotein signal peptidase (Serratia marcescens).